The following is a 503-amino-acid chain: Aminoaldehyde dehydrogenase 1, peroxisomal (503 aa).

Na(+)-binding residues include N27, I28, D99, and L189. 238–245 serves as a coordination point for NAD(+); sequence GSSATGSK. E260 functions as the Proton acceptor in the catalytic mechanism. NAD(+) contacts are provided by C294 and E393. C294 (nucleophile) is an active-site residue. A Microbody targeting signal motif is present at residues 501-503; it reads SKL.

This sequence belongs to the aldehyde dehydrogenase family. Forms homodimers.

It is found in the peroxisome. The catalysed reaction is 3-aminopropanal + NAD(+) + H2O = beta-alanine + NADH + 2 H(+). It catalyses the reaction 4-aminobutanal + NAD(+) + H2O = 4-aminobutanoate + NADH + 2 H(+). The enzyme catalyses 4-guanidinobutanal + NAD(+) + H2O = 4-guanidinobutanoate + NADH + 2 H(+). The protein operates within amine and polyamine biosynthesis; betaine biosynthesis via choline pathway; betaine from betaine aldehyde: step 1/1. Its function is as follows. Dehydrogenase that catalyzes the oxidation of several aminoaldehydes. Metabolizes and detoxifies aldehyde products of polyamine degradation to non-toxic amino acids. Catalyzes the oxidation of 3-aminopropanal to beta-alanine. Catalyzes the oxidation of 4-aminobutanal to 4-aminobutanoate. Catalyzes the oxidation of 4-guanidinobutanal to 4-guanidinobutanoate. This Pisum sativum (Garden pea) protein is Aminoaldehyde dehydrogenase 1, peroxisomal.